The primary structure comprises 406 residues: Bifunctional enzyme IspD/IspF (406 aa).

The tract at residues 1 to 246 is 2-C-methyl-D-erythritol 4-phosphate cytidylyltransferase; that stretch reads MLQMPSKQPI…KLSASLLPDV (246 aa). The 2-C-methyl-D-erythritol 2,4-cyclodiphosphate synthase stretch occupies residues 247-406; sequence RTGNGYDVHQ…ATVVYRGVKR (160 aa). A divalent metal cation-binding residues include D253 and H255. 4-CDP-2-C-methyl-D-erythritol 2-phosphate is bound by residues 253-255 and 279-280; these read DVH and HS. A divalent metal cation is bound at residue H287. 4-CDP-2-C-methyl-D-erythritol 2-phosphate contacts are provided by residues 301–303, 377–380, F384, and R387; these read DIG and TTNE.

The protein in the N-terminal section; belongs to the IspD/TarI cytidylyltransferase family. IspD subfamily. In the C-terminal section; belongs to the IspF family. It depends on a divalent metal cation as a cofactor.

The catalysed reaction is 2-C-methyl-D-erythritol 4-phosphate + CTP + H(+) = 4-CDP-2-C-methyl-D-erythritol + diphosphate. The enzyme catalyses 4-CDP-2-C-methyl-D-erythritol 2-phosphate = 2-C-methyl-D-erythritol 2,4-cyclic diphosphate + CMP. It participates in isoprenoid biosynthesis; isopentenyl diphosphate biosynthesis via DXP pathway; isopentenyl diphosphate from 1-deoxy-D-xylulose 5-phosphate: step 2/6. The protein operates within isoprenoid biosynthesis; isopentenyl diphosphate biosynthesis via DXP pathway; isopentenyl diphosphate from 1-deoxy-D-xylulose 5-phosphate: step 4/6. Its function is as follows. Bifunctional enzyme that catalyzes the formation of 4-diphosphocytidyl-2-C-methyl-D-erythritol from CTP and 2-C-methyl-D-erythritol 4-phosphate (MEP) (IspD), and catalyzes the conversion of 4-diphosphocytidyl-2-C-methyl-D-erythritol 2-phosphate (CDP-ME2P) to 2-C-methyl-D-erythritol 2,4-cyclodiphosphate (ME-CPP) with a corresponding release of cytidine 5-monophosphate (CMP) (IspF). This is Bifunctional enzyme IspD/IspF from Rhizobium leguminosarum bv. trifolii (strain WSM2304).